Consider the following 360-residue polypeptide: DNA replication and repair protein RecF (360 aa).

G30–T37 is a binding site for ATP.

It belongs to the RecF family.

The protein resides in the cytoplasm. In terms of biological role, the RecF protein is involved in DNA metabolism; it is required for DNA replication and normal SOS inducibility. RecF binds preferentially to single-stranded, linear DNA. It also seems to bind ATP. This chain is DNA replication and repair protein RecF, found in Deinococcus deserti (strain DSM 17065 / CIP 109153 / LMG 22923 / VCD115).